The sequence spans 427 residues: Glutamate-1-semialdehyde 2,1-aminomutase (427 aa).

Residue lysine 265 is modified to N6-(pyridoxal phosphate)lysine.

The protein belongs to the class-III pyridoxal-phosphate-dependent aminotransferase family. HemL subfamily. Homodimer. The cofactor is pyridoxal 5'-phosphate.

Its subcellular location is the cytoplasm. It carries out the reaction (S)-4-amino-5-oxopentanoate = 5-aminolevulinate. It participates in porphyrin-containing compound metabolism; protoporphyrin-IX biosynthesis; 5-aminolevulinate from L-glutamyl-tRNA(Glu): step 2/2. This chain is Glutamate-1-semialdehyde 2,1-aminomutase, found in Burkholderia thailandensis (strain ATCC 700388 / DSM 13276 / CCUG 48851 / CIP 106301 / E264).